The following is a 315-amino-acid chain: HTH-type transcriptional regulator TreR (315 aa).

The HTH lacI-type domain occupies 5–59 (LTIKDIARLSGVGKSTVSRVLNNESGVSERTRERVEAVMNQHGFSPSRSARAMRG). The segment at residues 7–26 (IKDIARLSGVGKSTVSRVLN) is a DNA-binding region (H-T-H motif). Residues 71 to 77 (RLDSLSE), Gly-126, Arg-147, 187 to 190 (DITT), Arg-194, Thr-242, and Tyr-284 each bind alpha,alpha-trehalose 6-phosphate.

In terms of assembly, homodimer.

Repressor of the treBC operon. It is able to bind trehalose-6-phosphate. The chain is HTH-type transcriptional regulator TreR (treR) from Salmonella typhimurium (strain LT2 / SGSC1412 / ATCC 700720).